We begin with the raw amino-acid sequence, 333 residues long: Flotillin-like protein FloA (333 aa).

A helical transmembrane segment spans residues 10–30 (IFLIAGGIIFLVLFFHYVPFF).

The protein belongs to the flotillin-like FloA family. As to quaternary structure, homooligomerizes.

The protein resides in the cell membrane. It localises to the membrane raft. In terms of biological role, found in functional membrane microdomains (FMM) that may be equivalent to eukaryotic membrane rafts. FMMs are highly dynamic and increase in number as cells age. Flotillins are thought to be important factors in membrane fluidity. The protein is Flotillin-like protein FloA of Bacteroides fragilis (strain ATCC 25285 / DSM 2151 / CCUG 4856 / JCM 11019 / LMG 10263 / NCTC 9343 / Onslow / VPI 2553 / EN-2).